Consider the following 189-residue polypeptide: Lipid A acyltransferase PagP (189 aa).

Residues 1–23 form the signal peptide; that stretch reads MKLKSVLYLLMLLNCLGLKSAHA. Residues His61, Asp104, and Ser105 contribute to the active site.

Belongs to the lipid A palmitoyltransferase family. As to quaternary structure, homodimer.

It is found in the cell outer membrane. It catalyses the reaction a lipid A + a 1,2-diacyl-sn-glycero-3-phosphocholine = a hepta-acyl lipid A + a 2-acyl-sn-glycero-3-phosphocholine. It carries out the reaction a lipid IVA + a 1,2-diacyl-sn-glycero-3-phosphocholine = a lipid IVB + a 2-acyl-sn-glycero-3-phosphocholine. The catalysed reaction is a lipid IIA + a 1,2-diacyl-sn-glycero-3-phosphocholine = a lipid IIB + a 2-acyl-sn-glycero-3-phosphocholine. Transfers a fatty acid residue from the sn-1 position of a phospholipid to the N-linked hydroxyfatty acid chain on the proximal unit of lipid A or its precursors. The polypeptide is Lipid A acyltransferase PagP (Erwinia amylovora (strain ATCC 49946 / CCPPB 0273 / Ea273 / 27-3)).